A 162-amino-acid polypeptide reads, in one-letter code: NADH-quinone oxidoreductase subunit C (162 aa).

The protein belongs to the complex I 30 kDa subunit family. In terms of assembly, NDH-1 is composed of 14 different subunits. Subunits NuoB, C, D, E, F, and G constitute the peripheral sector of the complex.

It is found in the cell inner membrane. The catalysed reaction is a quinone + NADH + 5 H(+)(in) = a quinol + NAD(+) + 4 H(+)(out). NDH-1 shuttles electrons from NADH, via FMN and iron-sulfur (Fe-S) centers, to quinones in the respiratory chain. The immediate electron acceptor for the enzyme in this species is believed to be ubiquinone. Couples the redox reaction to proton translocation (for every two electrons transferred, four hydrogen ions are translocated across the cytoplasmic membrane), and thus conserves the redox energy in a proton gradient. The sequence is that of NADH-quinone oxidoreductase subunit C from Geobacter sulfurreducens (strain ATCC 51573 / DSM 12127 / PCA).